Consider the following 123-residue polypeptide: MAVSHSVKERTISENSLIILLQGLQGRVTTVDLRDESVAHGRIDNVDAFMNIRLAKVTYTDRWGHQVKLDDLFVTGRNVRYVHIPDDVNITSTIEQQLQIIHRVRNFGGKGQGRWEFPPKNCK.

One can recognise a Sm domain in the interval 16–88 (SLIILLQGLQ…VRYVHIPDDV (73 aa)).

Belongs to the snRNP Sm proteins family. As to quaternary structure, component of the heptameric ring U7 snRNP complex, or U7 Sm protein core complex, at least composed of LSM10, LSM11, SNRPB, SNRPD3, SNRPE, SNRPF, SNRPG and U7 snRNA. Formation of the U7 snRNP is an ATP-dependent process mediated by a specialized SMN complex containing at least the Sm protein core complex and additionally, the U7-specific LSM10 and LSM11 proteins. Interacts with CLNS1A and SMN. Not methylated. Methylation is not necessary for interaction with SMN.

The protein localises to the nucleus. Its function is as follows. Appears to function in the U7 snRNP complex that is involved in histone 3'-end processing. Increases U7 snRNA levels but not histone 3'-end pre-mRNA processing activity, when overexpressed. Required for cell cycle progression from G1 to S phases. Binds specifically to U7 snRNA. Binds to the downstream cleavage product (DCP) of histone pre-mRNA in a U7 snRNP dependent manner. The polypeptide is U7 snRNA-associated Sm-like protein LSm10 (LSM10) (Homo sapiens (Human)).